Reading from the N-terminus, the 214-residue chain is Anti-sigma-F factor NrsF (214 aa).

The Cytoplasmic portion of the chain corresponds to 1 to 25 (MRTDDLIDALAADAGRGTEPAPPRR). Residues 26 to 46 (LALVAGLGGVAALLLVLGWLQ) form a helical membrane-spanning segment. Topologically, residues 47–53 (ARPDLGQ) are periplasmic. A helical membrane pass occupies residues 54–74 (AILGPMFWVKAIYTGLLGLAG). Topologically, residues 75–90 (YLAVERLSRPGGSGRR) are cytoplasmic. The chain crosses the membrane as a helical span at residues 91–111 (GWIIGAVVFGACAVAGIYQAI). The Periplasmic segment spans residues 112–134 (TSPDVQAALKLLHGYSWRSCSPR). The chain crosses the membrane as a helical span at residues 135-155 (ILVLGLPMLALGLWALRGMAP). Residues 156–158 (TRP) are Cytoplasmic-facing. Residues 159 to 179 (GLAGFAMGLFSGGVVATLYGL) traverse the membrane as a helical segment. The Periplasmic portion of the chain corresponds to 180 to 185 (HCPEHT). Residues 186 to 206 (FTFLALWYSLGVLALGLIGGW) form a helical membrane-spanning segment. The Cytoplasmic segment spans residues 207 to 214 (AGRWLLRW).

Belongs to the NrsF anti-sigma-F factor family.

The protein resides in the cell inner membrane. In terms of biological role, an anti-sigma factor for extracytoplasmic function (ECF) sigma factor sigma-F (SigF), which responds to chromate and cadmium. Overexpression leads to loss of response to dichromate. ECF sigma factors are held in an inactive form by a cognate anti-sigma factor. The chain is Anti-sigma-F factor NrsF from Caulobacter vibrioides (strain NA1000 / CB15N) (Caulobacter crescentus).